A 423-amino-acid chain; its full sequence is Glucose-1-phosphate adenylyltransferase (423 aa).

Alpha-D-glucose 1-phosphate contacts are provided by residues tyrosine 98, glycine 163, 178–179, and serine 189; that span reads EK.

This sequence belongs to the bacterial/plant glucose-1-phosphate adenylyltransferase family. In terms of assembly, homotetramer.

It catalyses the reaction alpha-D-glucose 1-phosphate + ATP + H(+) = ADP-alpha-D-glucose + diphosphate. It participates in glycan biosynthesis; glycogen biosynthesis. Involved in the biosynthesis of ADP-glucose, a building block required for the elongation reactions to produce glycogen. Catalyzes the reaction between ATP and alpha-D-glucose 1-phosphate (G1P) to produce pyrophosphate and ADP-Glc. In Thermotoga sp. (strain RQ2), this protein is Glucose-1-phosphate adenylyltransferase.